A 102-amino-acid polypeptide reads, in one-letter code: ATP-dependent Clp protease adapter protein ClpS (102 aa).

The protein belongs to the ClpS family. In terms of assembly, binds to the N-terminal domain of the chaperone ClpA.

In terms of biological role, involved in the modulation of the specificity of the ClpAP-mediated ATP-dependent protein degradation. The polypeptide is ATP-dependent Clp protease adapter protein ClpS (Shewanella denitrificans (strain OS217 / ATCC BAA-1090 / DSM 15013)).